Consider the following 1400-residue polypeptide: MKDLLNFLKAQHKTEEFDAIKIGLSSPDMIRSWSFGEVKKPETINYRTFKPERDGLFCARIFGPVKDYECLCGKYKRLKHRGVICEKCGVEVTQTKVRRDRMGHIELASPVAHIWFLKSLPSRIGLLMDIPLRDIERVLYFEMYVVTEPGMTDLEKGQMLTEEEYLDRLEEWGDEFTAKMGAEAIKDLLGSMDMHAEAEQMREELETTNSETKRKKVTKRLKLVEAFIASGNNPEWMILTVLPVLPPDLRPLVPLDGGRFATSDLNDLYRRVINRNNRLKRLLELAAPDIIVRNEKRMLQESVDALLDNGRRGRAITGSNKRPLKSLADMIKGKQGRFRQNLLGKRVDYSGRSVITVGPYLRLHQCGLPKKMALELFKPFIYSKLETRGLATTIKAAKKMVEREEAVVWDILDEVIREHPVLLNRAPTLHRLGIQAFEPVLIEGKAIQLHPLVCAAYNADFDGDQMAVHVPLTLEAQLEARTLMMSTNNILSPASGDPIIVPSQDVVLGLYYMTREKINVKGEGMYLSGPAEAEKAYRTKQAELHARVKVRITETVVDEDGNSTTETKMVDTTVGRAMLWQIVPAGLPYSIVNQKLGKKQISNLLNEAYRKLGLKDTVIFADQIMYTGFAYAALSGVSVGIDDMVVPPAKYTEIAEAEEEVREIQEQYQSGLVTAGERYNKVIDIWASTNDRVAKAMMENLSSETVVNREGEEEQQESFNSIYMMADSGARGSAAQIRQLAGMRGLMARPDGSIIETPITANFKEGLNVLQYFISTHGARKGLADTALKTANSGYLTRRLVDVAQDVVVTEHDCGTHEGVDMMPHIEGGDVKVALSELALGRVVAEDVLKPGTEDVLIPRNTLIDEKWCQIMEENSVDSMKVRSVVTCDSDFGCCAQCYGRDLARGHLVNQGEAVGVIAAQSIGEPGTQLTMRTFHIGGAASTAAAENSIQAKNNGSVKLHNAKFVTNKDGKLVITSRASELTIIDEFGRTKEKHKLPYGSLLSKGDNDAVEAGETVANWEAHTLPIITEVAGRIQFVDMIDGVTVSRQTDDLTGLSSSEVTDAAARPAAGKDMRPAIKLVDEQGNDVMIPGTEMPAHYFLPGKAIVNIEDGAEVGVGDTLARIPQKSGGNKDITGGLPRVADLFEARKPKEPAILAEHTGTVSFGKETKGKRRLVITRDSGEVYEEMIPKHRQLNVFEGERVERGDVIADGPESPHDILRLRGVHAVTQYIANEVQEVYRLQGVKINDKHIETIVRQMLRKCTITHAGDSEFLPGEQVEYSQVKIANRNLEAEGKEPARFERELLGITKASLATESFISAASFQETTRVLTEAAVSGKRDDLRGLKENVIVGRLIPAGTGFAYHQERQAKRAEAQEGPSAEQATDNLAALLNAGFSSDE.

The Zn(2+) site is built by Cys70, Cys72, Cys85, and Cys88. Mg(2+) is bound by residues Asp460, Asp462, and Asp464. Residues Cys814, Cys888, Cys895, and Cys898 each coordinate Zn(2+). A disordered region spans residues 1368 to 1400; sequence RQAKRAEAQEGPSAEQATDNLAALLNAGFSSDE.

Belongs to the RNA polymerase beta' chain family. In terms of assembly, the RNAP catalytic core consists of 2 alpha, 1 beta, 1 beta' and 1 omega subunit. When a sigma factor is associated with the core the holoenzyme is formed, which can initiate transcription. Mg(2+) is required as a cofactor. It depends on Zn(2+) as a cofactor.

The enzyme catalyses RNA(n) + a ribonucleoside 5'-triphosphate = RNA(n+1) + diphosphate. In terms of biological role, DNA-dependent RNA polymerase catalyzes the transcription of DNA into RNA using the four ribonucleoside triphosphates as substrates. This chain is DNA-directed RNA polymerase subunit beta', found in Vibrio parahaemolyticus serotype O3:K6 (strain RIMD 2210633).